We begin with the raw amino-acid sequence, 131 residues long: Protein DfrA (131 aa).

It belongs to the RutC family.

The chain is Protein DfrA (dfrA) from Myxococcus xanthus.